Consider the following 436-residue polypeptide: MQPVVETLSGLERRVDLAVSVAEVEKEVQAQLKRVGRTAKVAGFRPGKAPLAMLERSHGPGIRYDVINSLVGRAFEQAVDGAKLRVAGSPTLTPKTEGVAEDTLAFTATFEVYPEVTVPDLSALAVTRYDTPVTDAEVNQTLDVLRKQRAKFEIREGRASQDGDRVVLDFAGTIDGVPFEGGKAEDFPFVLGQGRMLPEFEEAALGLKAGESKVFPLKFPDDYQGKEVAGKTAEFTITVKEVAEGVLPEVDAEFAKSLGQAEGDVEKLKADIRTNIEREVKARLQGRTKGSVMDALVEAGKFDVPKALVDSDVEGRIAAAREELKQRGVPNADSVPMPAEVFSTESERRVRLGLLVSELVKQAQLQAKPEQVRARIEEFAQNYEQPAQVVSYYLADRQRRAEIEAIVLEDNVVAHVLENAKVADEKVPFDQLMGMA.

The PPIase FKBP-type domain maps to 163-248 (GDRVVLDFAG…VKEVAEGVLP (86 aa)).

This sequence belongs to the FKBP-type PPIase family. Tig subfamily.

The protein localises to the cytoplasm. It catalyses the reaction [protein]-peptidylproline (omega=180) = [protein]-peptidylproline (omega=0). Functionally, involved in protein export. Acts as a chaperone by maintaining the newly synthesized protein in an open conformation. Functions as a peptidyl-prolyl cis-trans isomerase. This Bordetella pertussis (strain Tohama I / ATCC BAA-589 / NCTC 13251) protein is Trigger factor.